The following is a 216-amino-acid chain: Sporamin B (216 aa).

Residues 1–21 (MKALALLFVLSLYLLPNPAHS) form the signal peptide.

Belongs to the protease inhibitor I3 (leguminous Kunitz-type inhibitor) family. In terms of tissue distribution, accumulates specifically in tuberous roots and tubers upon tuberization. Sporamin accounts 60 to 80% of the total soluble protein of the organ.

Its subcellular location is the vacuole. Major tuberous root protein. The sequence is that of Sporamin B (GSPO-B1) from Ipomoea batatas (Sweet potato).